The chain runs to 561 residues: Glucose-6-phosphate isomerase (561 aa).

The Proton donor role is filled by Glu-366. Residues His-397 and Lys-525 contribute to the active site.

It belongs to the GPI family.

Its subcellular location is the cytoplasm. The catalysed reaction is alpha-D-glucose 6-phosphate = beta-D-fructose 6-phosphate. Its pathway is carbohydrate degradation; glycolysis; D-glyceraldehyde 3-phosphate and glycerone phosphate from D-glucose: step 2/4. This is Glucose-6-phosphate isomerase (gpi) from Dictyostelium discoideum (Social amoeba).